Here is a 111-residue protein sequence, read N- to C-terminus: Ig kappa chain V-III region PC 7940 (111 aa).

The interval 1-23 is framework-1; sequence DIVLTQSPASLAVSLGQRATISC. Cys23 and Cys92 form a disulfide bridge. Positions 24–38 are complementarity-determining-1; it reads RASKSVSAFGYSYMH. Residues 39–53 form a framework-2 region; that stretch reads WYQQKPGQPPKLLIY. The tract at residues 54-60 is complementarity-determining-2; it reads LASNLES. The framework-3 stretch occupies residues 61–92; sequence GVPARFSGSGSGTDFTLNIHPVEEEDAVTYYC. The tract at residues 93 to 101 is complementarity-determining-3; sequence QHSRELPPT. The tract at residues 102-111 is framework-4; sequence FGGGTKLEIK.

The polypeptide is Ig kappa chain V-III region PC 7940 (Mus musculus (Mouse)).